The following is a 163-amino-acid chain: Xanthine-guanine phosphoribosyltransferase (163 aa).

5-phospho-alpha-D-ribose 1-diphosphate-binding positions include 43-44 (RG) and 95-103 (DDLADTGGT). Position 96 (Asp96) interacts with Mg(2+). 2 residues coordinate guanine: Asp99 and Ile142. Xanthine-binding residues include Asp99 and Ile142. GMP-binding positions include 99–103 (DTGGT) and 141–142 (WI).

Belongs to the purine/pyrimidine phosphoribosyltransferase family. XGPT subfamily. Homotetramer. Mg(2+) serves as cofactor.

The protein resides in the cell inner membrane. The catalysed reaction is GMP + diphosphate = guanine + 5-phospho-alpha-D-ribose 1-diphosphate. It carries out the reaction XMP + diphosphate = xanthine + 5-phospho-alpha-D-ribose 1-diphosphate. It catalyses the reaction IMP + diphosphate = hypoxanthine + 5-phospho-alpha-D-ribose 1-diphosphate. It participates in purine metabolism; GMP biosynthesis via salvage pathway; GMP from guanine: step 1/1. It functions in the pathway purine metabolism; XMP biosynthesis via salvage pathway; XMP from xanthine: step 1/1. Purine salvage pathway enzyme that catalyzes the transfer of the ribosyl-5-phosphate group from 5-phospho-alpha-D-ribose 1-diphosphate (PRPP) to the N9 position of the 6-oxopurines guanine and xanthine to form the corresponding ribonucleotides GMP (guanosine 5'-monophosphate) and XMP (xanthosine 5'-monophosphate), with the release of PPi. To a lesser extent, also acts on hypoxanthine. This is Xanthine-guanine phosphoribosyltransferase from Nitratidesulfovibrio vulgaris (strain ATCC 29579 / DSM 644 / CCUG 34227 / NCIMB 8303 / VKM B-1760 / Hildenborough) (Desulfovibrio vulgaris).